The chain runs to 221 residues: Carbonic anhydrase (221 aa).

Zn(2+) is bound by residues Cys-38, Asp-40, His-99, and Cys-102.

The protein belongs to the beta-class carbonic anhydrase family. Zn(2+) serves as cofactor.

It carries out the reaction hydrogencarbonate + H(+) = CO2 + H2O. The protein is Carbonic anhydrase (cynT) of Helicobacter pylori (strain ATCC 700392 / 26695) (Campylobacter pylori).